A 346-amino-acid polypeptide reads, in one-letter code: Aspartate-semialdehyde dehydrogenase (346 aa).

NADP(+) is bound by residues 12–15 (SGAV) and 40–41 (RS). R101 lines the phosphate pocket. C131 serves as the catalytic Acyl-thioester intermediate. Q158 serves as a coordination point for substrate. 161 to 162 (SG) is an NADP(+) binding site. K225 serves as a coordination point for phosphate. R246 is a substrate binding site. The Proton acceptor role is filled by H253. Q326 lines the NADP(+) pocket.

This sequence belongs to the aspartate-semialdehyde dehydrogenase family. In terms of assembly, homodimer.

It catalyses the reaction L-aspartate 4-semialdehyde + phosphate + NADP(+) = 4-phospho-L-aspartate + NADPH + H(+). It participates in amino-acid biosynthesis; L-lysine biosynthesis via DAP pathway; (S)-tetrahydrodipicolinate from L-aspartate: step 2/4. The protein operates within amino-acid biosynthesis; L-methionine biosynthesis via de novo pathway; L-homoserine from L-aspartate: step 2/3. It functions in the pathway amino-acid biosynthesis; L-threonine biosynthesis; L-threonine from L-aspartate: step 2/5. Functionally, catalyzes the NADPH-dependent formation of L-aspartate-semialdehyde (L-ASA) by the reductive dephosphorylation of L-aspartyl-4-phosphate. In Helicobacter pylori (strain ATCC 700392 / 26695) (Campylobacter pylori), this protein is Aspartate-semialdehyde dehydrogenase.